The chain runs to 455 residues: MTSNPETPVVSNVTLSELRSDVNKRGTIDSYIYGPDEQVTTYFVREIRPCAAFSKMPVLLNTGNGSNKFGGTFTMPINASGDYLLALTAYISISAGKLRSYAAGTESSYFPKLAHKLIKSVRLKVDAKPLVELSSNFMDTWSEFMIDGGNYEAYTNMVGGDFQYSRSVDIGAKTLVLPIPLYFSRDSGVALPIGMMVNNRVTVEFVFRKLSDLLIKENVPDTGAGTGFMNMLTDGDFATPPEITKFEVVADFAVVTDFEIDRTSCSPHYILMEKPTDIAATEILKPTEAGSTLSYDIEHSSGILKALFFGVRNITHSEYLDYYEVGLPKSNNGVRSIGVSALSKIGIKCGDRYRVPMLPAEHFVFTEPYRAACRVPTRNRGQYMYSFALDLKTVDPKGSINPSNFNSSISVVIEPSEALRNSAETFEFTAIALTSYILYIDNGSLKKIDNGGDFN.

This sequence belongs to the ascoviridae capsid protein family.

The protein resides in the virion. In terms of biological role, major protein of the capsid. The polypeptide is Major capsid protein (MCP) (Heliothis virescens ascovirus 3e (HvAV-3e)).